Consider the following 199-residue polypeptide: NAD(P)H dehydrogenase (quinone) (199 aa).

One can recognise a Flavodoxin-like domain in the interval methionine 4–valine 190. FMN contacts are provided by residues serine 10 to methionine 15 and threonine 78 to tyrosine 80. Tyrosine 12 contacts NAD(+). A substrate-binding site is contributed by tryptophan 98. Residues serine 113–glycine 119 and histidine 134 each bind FMN. The disordered stretch occupies residues glycine 158 to aspartate 181. Over residues methionine 163–alanine 177 the composition is skewed to polar residues.

It belongs to the WrbA family. Requires FMN as cofactor.

The catalysed reaction is a quinone + NADH + H(+) = a quinol + NAD(+). The enzyme catalyses a quinone + NADPH + H(+) = a quinol + NADP(+). This Brucella abortus (strain S19) protein is NAD(P)H dehydrogenase (quinone).